Reading from the N-terminus, the 488-residue chain is N-succinylglutamate 5-semialdehyde dehydrogenase (488 aa).

221–226 (GSSRTG) provides a ligand contact to NAD(+). Residues E244 and C278 contribute to the active site.

Belongs to the aldehyde dehydrogenase family. AstD subfamily.

It catalyses the reaction N-succinyl-L-glutamate 5-semialdehyde + NAD(+) + H2O = N-succinyl-L-glutamate + NADH + 2 H(+). It functions in the pathway amino-acid degradation; L-arginine degradation via AST pathway; L-glutamate and succinate from L-arginine: step 4/5. Its function is as follows. Catalyzes the NAD-dependent reduction of succinylglutamate semialdehyde into succinylglutamate. The sequence is that of N-succinylglutamate 5-semialdehyde dehydrogenase from Pseudomonas syringae pv. syringae (strain B728a).